The following is a 369-amino-acid chain: Methionine import ATP-binding protein MetN 2 (369 aa).

The 238-residue stretch at 33-270 (VRFIGLGKTY…PRHEVTRTLL (238 aa)) folds into the ABC transporter domain. Residue 67 to 74 (GRSGAGKS) coordinates ATP.

This sequence belongs to the ABC transporter superfamily. Methionine importer (TC 3.A.1.24) family. In terms of assembly, the complex is composed of two ATP-binding proteins (MetN), two transmembrane proteins (MetI) and a solute-binding protein (MetQ).

It is found in the cell inner membrane. It catalyses the reaction L-methionine(out) + ATP + H2O = L-methionine(in) + ADP + phosphate + H(+). The enzyme catalyses D-methionine(out) + ATP + H2O = D-methionine(in) + ADP + phosphate + H(+). Functionally, part of the ABC transporter complex MetNIQ involved in methionine import. Responsible for energy coupling to the transport system. This is Methionine import ATP-binding protein MetN 2 from Pseudomonas putida (strain ATCC 47054 / DSM 6125 / CFBP 8728 / NCIMB 11950 / KT2440).